We begin with the raw amino-acid sequence, 202 residues long: ATP-dependent Clp protease proteolytic subunit (202 aa).

S101 serves as the catalytic Nucleophile. H126 is an active-site residue.

Belongs to the peptidase S14 family. In terms of assembly, component of the chloroplastic Clp protease core complex.

The protein localises to the plastid. It localises to the chloroplast stroma. It carries out the reaction Hydrolysis of proteins to small peptides in the presence of ATP and magnesium. alpha-casein is the usual test substrate. In the absence of ATP, only oligopeptides shorter than five residues are hydrolyzed (such as succinyl-Leu-Tyr-|-NHMec, and Leu-Tyr-Leu-|-Tyr-Trp, in which cleavage of the -Tyr-|-Leu- and -Tyr-|-Trp bonds also occurs).. Its function is as follows. Cleaves peptides in various proteins in a process that requires ATP hydrolysis. Has a chymotrypsin-like activity. Plays a major role in the degradation of misfolded proteins. The protein is ATP-dependent Clp protease proteolytic subunit of Buxus microphylla (Littleleaf boxwood).